An 848-amino-acid chain; its full sequence is Aryl hydrocarbon receptor (848 aa).

The propeptide occupies 1–9 (MSSGANITY). Residues 1–38 (MSSGANITYASRKRRKPVQKTVKPIPAEGIKSNPSKRH) are disordered. 2 short sequence motifs (nuclear localization signal) span residues 12–15 (RKRR) and 36–41 (KRHRDR). The bHLH domain occupies 26–79 (PAEGIKSNPSKRHRDRLNTELDRLASLLPFPQDVINKLDKLSVLRLSVSYLRAK). Positions 37-65 (RHRDRLNTELDRLASLLPFPQDVINKLDK) are DNA-binding. 3 required for maintaining the overall integrity of the AHR:ARNT heterodimer and its transcriptional activity regions span residues 49-81 (LASL…AKSF), 116-124 (LLQALNGFV), and 260-262 (FAI). The Nuclear export signal signature appears at 63–71 (LDKLSVLRL). The PAS 1 domain maps to 116–179 (LLQALNGFVL…RQLHWALNPD (64 aa)). Positions 269 to 336 (PSILEIRTKN…CAESHIRMIK (68 aa)) constitute a PAS 2 domain. The PAC domain occupies 342-380 (MTVFRLFAKHSRWRWVQSNARLIYRNGRPDYIIATQRPL). Residues 421 to 449 (LPIRTKSNTSRKDWAPQSTPSKDSFHPSS) are disordered. Polar residues predominate over residues 436 to 449 (PQSTPSKDSFHPSS).

In terms of assembly, homodimer. Heterodimer; efficient DNA binding requires dimerization with another bHLH protein. Interacts with ARNT; the heterodimer ARNT:AHR binds to core DNA sequence 5'-TGCGTG-3' within the dioxin response element (DRE) of target gene promoters and activates their transcription. Binds MYBBP1A. Interacts with coactivators including SRC-1, RIP140 and NOCA7, and with the corepressor SMRT. Interacts with NEDD8 and IVNS1ABP. Interacts with BMAL1. Interacts with HSP90AB1. Interacts with TIPARP; leading to mono-ADP-ribosylation of AHR and subsequent inhibition of AHR. In terms of processing, mono-ADP-ribosylated, leading to inhibit transcription activator activity of AHR. Expressed in all tissues tested including brain, heart, kidney, liver, lung, muscle, ovary, skin, spleen and thymus.

The protein localises to the cytoplasm. Its subcellular location is the nucleus. Ligand-activated transcription factor that enables cells to adapt to changing conditions by sensing compounds from the environment, diet, microbiome and cellular metabolism, and which plays important roles in development, immunity and cancer. Upon ligand binding, translocates into the nucleus, where it heterodimerizes with ARNT and induces transcription by binding to xenobiotic response elements (XRE). Regulates a variety of biological processes, including angiogenesis, hematopoiesis, drug and lipid metabolism, cell motility and immune modulation. Xenobiotics can act as ligands: upon xenobiotic-binding, activates the expression of multiple phase I and II xenobiotic chemical metabolizing enzyme genes (such as the CYP1A1 gene). Mediates biochemical and toxic effects of halogenated aromatic hydrocarbons. Next to xenobiotics, natural ligands derived from plants, microbiota, and endogenous metabolism are potent AHR agonists. Tryptophan (Trp) derivatives constitute an important class of endogenous AHR ligands. Acts as a negative regulator of anti-tumor immunity: indoles and kynurenic acid generated by Trp catabolism act as ligand and activate AHR, thereby promoting AHR-driven cancer cell motility and suppressing adaptive immunity. Regulates the circadian clock by inhibiting the basal and circadian expression of the core circadian component PER1. Inhibits PER1 by repressing the CLOCK-BMAL1 heterodimer mediated transcriptional activation of PER1. The heterodimer ARNT:AHR binds to core DNA sequence 5'-TGCGTG-3' within the dioxin response element (DRE) of target gene promoters and activates their transcription. This Mus musculus (Mouse) protein is Aryl hydrocarbon receptor (Ahr).